Reading from the N-terminus, the 468-residue chain is UDP-N-acetylmuramate--L-alanine ligase (468 aa).

121–127 serves as a coordination point for ATP; that stretch reads GSHGKTT.

The protein belongs to the MurCDEF family.

Its subcellular location is the cytoplasm. It carries out the reaction UDP-N-acetyl-alpha-D-muramate + L-alanine + ATP = UDP-N-acetyl-alpha-D-muramoyl-L-alanine + ADP + phosphate + H(+). Its pathway is cell wall biogenesis; peptidoglycan biosynthesis. In terms of biological role, cell wall formation. The polypeptide is UDP-N-acetylmuramate--L-alanine ligase (Borrelia garinii subsp. bavariensis (strain ATCC BAA-2496 / DSM 23469 / PBi) (Borreliella bavariensis)).